A 591-amino-acid polypeptide reads, in one-letter code: V-type ATP synthase alpha chain (591 aa).

ATP is bound at residue 233 to 240 (GPFGAGKT).

This sequence belongs to the ATPase alpha/beta chains family.

It carries out the reaction ATP + H2O + 4 H(+)(in) = ADP + phosphate + 5 H(+)(out). Its function is as follows. Produces ATP from ADP in the presence of a proton gradient across the membrane. The V-type alpha chain is a catalytic subunit. The chain is V-type ATP synthase alpha chain from Streptococcus pyogenes serotype M28 (strain MGAS6180).